Here is a 75-residue protein sequence, read N- to C-terminus: U14-hexatoxin-Mg1a (75 aa).

A signal peptide spans methionine 1 to alanine 19. A propeptide spanning residues alanine 20–arginine 31 is cleaved from the precursor.

Post-translationally, contains 4 disulfide bonds. As to expression, expressed by the venom gland.

It localises to the secreted. Its function is as follows. No toxicity is observed upon intracranial injection into mice and intrathorax injection into crickets. This chain is U14-hexatoxin-Mg1a, found in Macrothele gigas (Japanese funnel web spider).